Here is a 152-residue protein sequence, read N- to C-terminus: SKP1-like protein 11 (152 aa).

An interaction with the F-box domain of F-box proteins region spans residues 94–152 (ILAANYLNIKSLLDLTCQTVADMIKGKTPEEIRSTFNIENDFTPEEEEAVRKENQWAFE).

Belongs to the SKP1 family. In terms of assembly, part of a SCF (SKP1-cullin-F-box) protein ligase complex. Interacts with ADO3/FKF1, COI1/FBL2, EBF1/FBL6, PP2A13, PP2B10, UFO, SKIP2, SKIP15, SKIP16, SKIP32, CPR1/CPR30, At1g55000, At1g67340, At1g78100, At3g04660, At3g16740, At3g61590, At4g38940 and At5g49610. In terms of tissue distribution, expressed in young seedlings, cotyledons, roots, leaves, floral stems, inflorescences, pollen, and siliques, with a slightly higher level in inflorescence than in other tissues.

It is found in the nucleus. It participates in protein modification; protein ubiquitination. In terms of biological role, involved in ubiquitination and subsequent proteasomal degradation of target proteins. Together with CUL1, RBX1 and a F-box protein, it forms a SCF E3 ubiquitin ligase complex. The functional specificity of this complex depends on the type of F-box protein. In the SCF complex, it serves as an adapter that links the F-box protein to CUL1. Plays a role during early flowers reproductive development. This Arabidopsis thaliana (Mouse-ear cress) protein is SKP1-like protein 11 (ASK11).